The primary structure comprises 504 residues: MTQTNGFDALHAHAQRLRGAAIPALLAAEPERPTQYAWQVGPLYFNFARQKYDRAALDALFAIARERDLAGAFQRLFRGEQVNVTEQRAALHTALRGDLTDAPVASECYATAAEVRERMGALIQQLEATDVTDIVSVGIGGSDLGPRLVADALRPVSGARLRVHFVSNVDGAAMQRTLATLDPARTAGILISKTFGTQETLLNGSILHAWLGGSERLYAVSANPERAAKAFDIAPGRVLPMWDWVGGRYSLWSAVGFPIALAIGFERFEQLLEGAAQFDAHALNTPLEENVAVLHGLTAVWNRNLLGSATHAVMTYDQRLALLPAYLQQLVMESLGKRVKLDGSAVDSDTVSVWWGGAGTDVQHSFFQALHQGTSVVPADFIGTVHNDDPYAENHVALMANVLAQTEALANGQDSSDPHRSYPGGRPSTVILLDALTPQALGALISMYEHSVYVQSVMWGINAFDQFGVELGKQLASQLLPALKGESADVADPVTRELLSKLRG.

Residue glutamate 333 is the Proton donor of the active site. Catalysis depends on residues histidine 364 and lysine 473.

The protein belongs to the GPI family.

Its subcellular location is the cytoplasm. The catalysed reaction is alpha-D-glucose 6-phosphate = beta-D-fructose 6-phosphate. It participates in carbohydrate biosynthesis; gluconeogenesis. Its pathway is carbohydrate degradation; glycolysis; D-glyceraldehyde 3-phosphate and glycerone phosphate from D-glucose: step 2/4. In terms of biological role, catalyzes the reversible isomerization of glucose-6-phosphate to fructose-6-phosphate. This Xanthomonas oryzae pv. oryzae (strain MAFF 311018) protein is Glucose-6-phosphate isomerase.